Reading from the N-terminus, the 60-residue chain is UPF0434 protein Dtpsy_1553 (60 aa).

The protein belongs to the UPF0434 family.

The chain is UPF0434 protein Dtpsy_1553 from Acidovorax ebreus (strain TPSY) (Diaphorobacter sp. (strain TPSY)).